A 564-amino-acid polypeptide reads, in one-letter code: Dicarboxylate transporter 2, chloroplastic (564 aa).

A chloroplast-targeting transit peptide spans 1–22 (MESLALLPTLSLSTTTTTSKAT). Residues 35–58 (RRPHLSLSLSSTPKPTLTFSSHSH) form a disordered region. Residues 39-58 (LSLSLSSTPKPTLTFSSHSH) show a composition bias toward low complexity. 12 consecutive transmembrane segments (helical) span residues 94-114 (GAKL…RFAV), 127-147 (LLAI…PVGA), 166-186 (TAFC…FFFA), 235-255 (AGGI…SLPG), 262-282 (LGTY…ALFL), 307-327 (VFWL…TPLI), 356-376 (VTKN…LWVF), 380-400 (IGVS…LLGV), 415-435 (TLAW…LGIV), 451-471 (LSWP…HYLF), 484-504 (AFLA…LALA), and 538-558 (MGFI…GVWW).

The protein belongs to the SLC13A/DASS transporter (TC 2.A.47) family. DIT1 subfamily. As to expression, expressed in leaves.

It is found in the plastid. The protein resides in the chloroplast inner membrane. In terms of biological role, glutamate/malate translocator involved with DIT1 in primary ammonia assimilation and in the re-assimilation of ammonia generated by the photorespiratory pathway. Exports the end product of ammonia assimilation, glutamate, from plastids to the cytosol. The precursor for ammonia assimilation, 2-oxoglutarate, is imported from the cytosol by DIT1. The sequence is that of Dicarboxylate transporter 2, chloroplastic (DIT2) from Spinacia oleracea (Spinach).